We begin with the raw amino-acid sequence, 166 residues long: Glycine cleavage system H protein 3, mitochondrial (166 aa).

A mitochondrion-targeting transit peptide spans 1-35 (MALRMWASSTANALKLSSSASKSHLLPAFSISRCF). Residues 57-139 (VATIGITDHA…YEDGWMIKVK (83 aa)) form the Lipoyl-binding domain. An N6-lipoyllysine modification is found at Lys-98. Residue Ser-141 is modified to Phosphoserine.

Belongs to the GcvH family. As to quaternary structure, the glycine cleavage system is composed of four proteins: P, T, L and H. The cofactor is (R)-lipoate. Post-translationally, S-nitrosylated and/or glutathionylated at unknown positions in response to nitric oxide.

The protein localises to the mitochondrion. Inhibited by harpin, S-nitrosoglutathione (GSNO), nitric oxide, N-ethylmaleimide and 5,5'-dithiobis-(2-nitrobenzoic acid). Functionally, the glycine decarboxylase (GDC) or glycine cleavage system catalyzes the degradation of glycine. The H protein shuttles the methylamine group of glycine from the P protein to the T protein. The polypeptide is Glycine cleavage system H protein 3, mitochondrial (GDH3) (Arabidopsis thaliana (Mouse-ear cress)).